The sequence spans 464 residues: Secretion-regulating guanine nucleotide exchange factor (464 aa).

7 RCC1 repeats span residues 14–66 (AAAL…VVTD), 68–118 (GSLF…ILTE), 119–170 (NGQV…AATA), 172–229 (GTVF…SLTD), 230–282 (AGEL…AQTV), 283–349 (TGKV…LAVI), and 350–401 (GGVC…ALCQ). The span at 301-313 (VETREGWESEKQD) shows a compositional bias: basic and acidic residues. The segment at 301–323 (VETREGWESEKQDPSLPGSGPQK) is disordered. Residues 411–464 (HPSVTSPSPDATKEARSQEAMEQERNQKERHAETSPQAQSDRFRNGGLVAETLE) are disordered. Residues 421–443 (ATKEARSQEAMEQERNQKERHAE) show a composition bias toward basic and acidic residues. Ser427 carries the phosphoserine modification.

In terms of assembly, interacts with SEC5. The interaction occurs only in the presence of magnesium or manganese and is stimulated by dCTP or GTP.

It localises to the cytoplasm. The protein resides in the nucleus. Probable guanine nucleotide exchange factor (GEF), which may be involved in the secretion process. The chain is Secretion-regulating guanine nucleotide exchange factor (SERGEF) from Bos taurus (Bovine).